A 354-amino-acid polypeptide reads, in one-letter code: Ornithine cyclodeaminase (354 aa).

L-ornithine contacts are provided by Arg-53 and Lys-77. NAD(+) is bound by residues Thr-92, Arg-120, 147-148 (AQ), Asp-169, Thr-209, 232-235 (VGGD), Lys-239, and Ser-300. Arg-120 is a binding site for L-ornithine. An L-ornithine-binding site is contributed by Asp-235. The active-site Proton donor/acceptor is the Asp-235. Val-301 contacts L-ornithine.

This sequence belongs to the ornithine cyclodeaminase/mu-crystallin family. The cofactor is NAD(+).

The enzyme catalyses L-ornithine = L-proline + NH4(+). It participates in amino-acid biosynthesis; L-proline biosynthesis; L-proline from L-ornithine: step 1/1. Its activity is regulated as follows. Is subject to substrate inhibition. Is regulated by L-arginine, which stimulates enzymatic activity at 0.1-1 mM while inhibits activity at higher concentrations, and has pronounced effects on the optima for pH and temperature and on the Km for L-ornithine. Is not inhibited by L-proline. Catalyzes the conversion of L-ornithine into L-proline with release of ammonia. Is involved in the utilization of nopaline, a catabolic pathway that proceeds through L-arginine and L-ornithine to L-proline. Nopaline is a predominant opine in plant cells transformed with Ti plasmid pTiC58. The sequence is that of Ornithine cyclodeaminase from Agrobacterium fabrum (strain C58 / ATCC 33970) (Agrobacterium tumefaciens (strain C58)).